The chain runs to 438 residues: Coiled-coil domain-containing protein 78 (438 aa).

Coiled coils occupy residues 74–105 (HLHE…LRGD) and 217–246 (SCQG…YVLR). Residues 345 to 381 (FSHREDQHGGPGALLSSPKKRPGGASQGGTSEPQGLD) are disordered.

Belongs to the CCDC78 family. As to expression, expressed primarily in skeletal muscle.

It is found in the cytoplasm. The protein localises to the cytoskeleton. Its subcellular location is the microtubule organizing center. It localises to the centrosome. The protein resides in the centriole. It is found in the perinuclear region. The protein localises to the cell membrane. Its subcellular location is the sarcolemma. It localises to the sarcoplasmic reticulum. In terms of biological role, component of the deuterosome, a structure that promotes de novo centriole amplification in multiciliated cells that can generate more than 100 centrioles. Deuterosome-mediated centriole amplification occurs in terminally differentiated multiciliated cells (G1/0) and not in S phase. Essential for centriole amplification and is required for CEP152 localization to the deuterosome. This chain is Coiled-coil domain-containing protein 78 (CCDC78), found in Homo sapiens (Human).